The sequence spans 559 residues: Putative helicase 22 (559 aa).

The Helicase ATP-binding domain maps to 186–347 (VSDVNVIGNG…EIMGLLGKIS (162 aa)). 199–206 (APTGSGKS) serves as a coordination point for ATP. The DEAH box signature appears at 300-303 (DEAH). The Helicase C-terminal domain maps to 410–552 (TNKQIISKIK…KMNFIENEYN (143 aa)).

This chain is Putative helicase 22 (SIFV0022), found in Sulfolobus islandicus filamentous virus (isolate Iceland/Hveragerdi) (SIFV).